Reading from the N-terminus, the 94-residue chain is Acylphosphatase (94 aa).

The 88-residue stretch at 3–90 (RVHVIVEGRV…SDEKQFRIMY (88 aa)) folds into the Acylphosphatase-like domain. Residues arginine 18 and asparagine 36 contribute to the active site.

Belongs to the acylphosphatase family.

It carries out the reaction an acyl phosphate + H2O = a carboxylate + phosphate + H(+). The protein is Acylphosphatase (acyP) of Geobacillus kaustophilus (strain HTA426).